A 439-amino-acid chain; its full sequence is Serine hydroxymethyltransferase (439 aa).

(6S)-5,6,7,8-tetrahydrofolate is bound by residues leucine 134 and 138–140; that span reads GHL. Residue lysine 243 is modified to N6-(pyridoxal phosphate)lysine.

Belongs to the SHMT family. In terms of assembly, homodimer. Pyridoxal 5'-phosphate is required as a cofactor.

Its subcellular location is the cytoplasm. The catalysed reaction is (6R)-5,10-methylene-5,6,7,8-tetrahydrofolate + glycine + H2O = (6S)-5,6,7,8-tetrahydrofolate + L-serine. The protein operates within one-carbon metabolism; tetrahydrofolate interconversion. It participates in amino-acid biosynthesis; glycine biosynthesis; glycine from L-serine: step 1/1. Functionally, catalyzes the reversible interconversion of serine and glycine with tetrahydrofolate (THF) serving as the one-carbon carrier. This reaction serves as the major source of one-carbon groups required for the biosynthesis of purines, thymidylate, methionine, and other important biomolecules. Also exhibits THF-independent aldolase activity toward beta-hydroxyamino acids, producing glycine and aldehydes, via a retro-aldol mechanism. The chain is Serine hydroxymethyltransferase from Brucella anthropi (strain ATCC 49188 / DSM 6882 / CCUG 24695 / JCM 21032 / LMG 3331 / NBRC 15819 / NCTC 12168 / Alc 37) (Ochrobactrum anthropi).